Here is a 217-residue protein sequence, read N- to C-terminus: 3,4-dihydroxy-2-butanone 4-phosphate synthase (217 aa).

D-ribulose 5-phosphate-binding positions include Arg37–Glu38, Asp42, Arg150–Thr154, and Glu174. Glu38 serves as a coordination point for Mg(2+). His153 contacts Mg(2+).

This sequence belongs to the DHBP synthase family. In terms of assembly, homodimer. Requires Mg(2+) as cofactor. Mn(2+) serves as cofactor.

It catalyses the reaction D-ribulose 5-phosphate = (2S)-2-hydroxy-3-oxobutyl phosphate + formate + H(+). It participates in cofactor biosynthesis; riboflavin biosynthesis; 2-hydroxy-3-oxobutyl phosphate from D-ribulose 5-phosphate: step 1/1. Catalyzes the conversion of D-ribulose 5-phosphate to formate and 3,4-dihydroxy-2-butanone 4-phosphate. This is 3,4-dihydroxy-2-butanone 4-phosphate synthase from Escherichia coli O17:K52:H18 (strain UMN026 / ExPEC).